The chain runs to 102 residues: UPF0045 protein Mb1933 (102 aa).

The protein belongs to the UPF0045 family.

This Mycobacterium bovis (strain ATCC BAA-935 / AF2122/97) protein is UPF0045 protein Mb1933.